Reading from the N-terminus, the 666-residue chain is Probable potassium transport system protein Kup (666 aa).

Transmembrane regions (helical) follow at residues 16-36 (GFII…LYTM), 58-78 (ISLI…LVAL), 99-119 (TPWL…DGAL), 141-161 (IFQN…LLFA), 167-187 (TGVI…FLGI), 221-241 (IFIL…YSDL), 253-273 (WPFV…WILA), 292-312 (FTMH…QALI), 343-363 (TYIP…VLLF), 373-393 (YGLA…FFLI), 402-422 (VLLM…ASAV), and 424-444 (FMHG…IMTI).

Belongs to the HAK/KUP transporter (TC 2.A.72) family.

The protein localises to the cell membrane. It carries out the reaction K(+)(in) + H(+)(in) = K(+)(out) + H(+)(out). In terms of biological role, transport of potassium into the cell. Likely operates as a K(+):H(+) symporter. This is Probable potassium transport system protein Kup from Streptococcus agalactiae serotype Ia (strain ATCC 27591 / A909 / CDC SS700).